Here is a 111-residue protein sequence, read N- to C-terminus: uncharacterized protein (111 aa).

The chain crosses the membrane as a helical span at residues 60–80 (TFGRFLAHISCLICILSKRIF).

The protein localises to the mitochondrion membrane. This is an uncharacterized protein from Arabidopsis thaliana (Mouse-ear cress).